The sequence spans 1008 residues: Phytosulfokine receptor 1 (1008 aa).

Residues 1–25 (MRVHRFCVIVIFLTELLCFFYSSES) form the signal peptide. Asn-55, Asn-64, and Asn-73 each carry an N-linked (GlcNAc...) asparagine glycan. LRR repeat units lie at residues 75–98 (TGRV…SLGK), 99–123 (LDEI…IFNL), 124–148 (KNLQ…NLPA), 150–170 (QSFD…ICHN), 172–194 (TQIR…GFGK), 195–219 (CVLL…LFHL), 221–243 (RLNL…IRNL), 244–266 (SSLV…VFDE), 291–315 (SPSL…CTAM), 316–339 (IALN…LPDC), 341–362 (RLKN…SFKN), and 363–387 (FESL…GILQ). An N-linked (GlcNAc...) asparagine glycan is attached at Asn-106. Asn-160, Asn-170, and Asn-187 each carry an N-linked (GlcNAc...) asparagine glycan. Asn-242 is a glycosylation site (N-linked (GlcNAc...) asparagine). Phytosulfokine is bound at residue Arg-300. N-linked (GlcNAc...) asparagine glycosylation is found at Asn-301 and Asn-311. Asn-346, Ser-370, and Ser-372 together coordinate phytosulfokine. Residues Asn-373, Asn-378, and Asn-391 are each glycosylated (N-linked (GlcNAc...) asparagine). LRR repeat units lie at residues 392–414 (LTTL…SLHF), 415–438 (EKLK…LSSS), 439–464 (NELQ…DFKA), and 466–486 (FYLD…LTKL). Residues Thr-398, Asn-424, and Asp-445 each coordinate phytosulfokine. Asn-472 and Asn-493 each carry an N-linked (GlcNAc...) asparagine glycan. Lys-508 serves as a coordination point for phytosulfokine. N-linked (GlcNAc...) asparagine glycosylation is found at Asn-510 and Asn-534. 4 LRR repeats span residues 521–545 (IFGF…EFGN), 546–570 (LKKL…LSGM), 571–594 (TSLE…LQQL), and 596–619 (FLSK…QFQT). Residues Asn-606 and Asn-622 are each glycosylated (N-linked (GlcNAc...) asparagine). A helical membrane pass occupies residues 660 to 680 (MAIGIAFGSVFLLTLLSLIVL). Thr-731 is subject to Phosphothreonine. In terms of domain architecture, Protein kinase spans 734 to 1005 (FDQANIIGCG…PTTQQLVSWL (272 aa)). Residues 740–748 (IGCGGFGMV) and Lys-762 contribute to the ATP site. Phosphotyrosine occurs at positions 807 and 847. Asp-860 acts as the Proton acceptor in catalysis. Tyr-902 carries the post-translational modification Phosphotyrosine.

Belongs to the protein kinase superfamily. Ser/Thr protein kinase family. In terms of assembly, homo- and heterodimers with PSY1R. Heterodimers with the somatic embryogenesis receptor-like kinases (SERKs). PSK is not directly involved in PSKR-SERK interaction but stabilizes PSKR island domain for recruitment of a SERK. Part of a functional complex containing PSKR1, BAK1, CNGC17, and AHA. Interacts with AHA1, AHA2, and BAK1, but not with CNGC17 or BRI1. Mg(2+) is required as a cofactor. It depends on Mn(2+) as a cofactor. In terms of tissue distribution, weakly expressed in roots, leaves, stems and flowers. Expressed in the primary and lateral roots, including root primordia and root tips, but not in the hypocotyl.

The protein resides in the cell membrane. It carries out the reaction L-seryl-[protein] + ATP = O-phospho-L-seryl-[protein] + ADP + H(+). The enzyme catalyses L-threonyl-[protein] + ATP = O-phospho-L-threonyl-[protein] + ADP + H(+). The catalysed reaction is GTP = 3',5'-cyclic GMP + diphosphate. With respect to regulation, cGMP suppresses kinase activity. In terms of biological role, phytosulfokine receptor with both a serine/threonine-protein kinase activity and a guanylate cyclase activity. Regulates, in response to phytosulfokine binding, a signaling cascade involved in plant cell differentiation, organogenesis, somatic embryogenesis, cellular proliferation and plant growth. Involved in plant immunity, with antagonistic effects on bacterial and fungal resistances. Not involved in PSY perception. CNGC17 and AHAs form a functional cation-translocating unit that is activated by PSKR1/BAK1 and possibly other BAK1/RLK complexes. The protein is Phytosulfokine receptor 1 of Arabidopsis thaliana (Mouse-ear cress).